We begin with the raw amino-acid sequence, 494 residues long: One cut domain family member 3 (494 aa).

3 disordered regions span residues 130-162 (AAAV…RLAA), 199-239 (LSPL…GDKL), and 295-319 (AHGP…AAAE). Pro residues-rich tracts occupy residues 148–158 (AAAPPPPPPPQ) and 214–225 (PQPPPPPPPPPL). Gly residues predominate over residues 297 to 313 (GPHGGGGGPGGSGGGPS). Positions 312 to 398 (PSAGAAAEEI…QRMSALRLAA (87 aa)) form a DNA-binding region, CUT. The homeobox DNA-binding region spans 414-473 (PKKQRLVFTDLQRRTLIAIFKENKRPSKEMQVTISQQLGLELNTVSNFFMNARRRCMNRW). The disordered stretch occupies residues 475 to 494 (EEPSTAPGGPAGATATFSKA). Residues 476-494 (EPSTAPGGPAGATATFSKA) show a composition bias toward low complexity.

The protein belongs to the CUT homeobox family.

The protein resides in the nucleus. Functionally, transcriptional activator. Binds the consensus DNA sequence 5'-DHWATTGAYTWWD-3' on a variety of gene promoters such as those of HNF3B and TTR. This Homo sapiens (Human) protein is One cut domain family member 3 (ONECUT3).